A 319-amino-acid chain; its full sequence is MSIEEKIQLIEKGTLEVIDTEELKEVLKKEQPIAYTGYEPSGKIHLGHAVTVQKLKTLQKLGFKIKILLADFHAFLNGKGSIEEIAETAEYNMKCFKALGLDETTEFILGSSFQLNEDYASKVYKLATLTTLKRARRSMDQVSRHDENPKVASVVYPIMQTVDMVALDVDVALGGMEQRKIQMLARENLEKIDEKVPVCIHTPLLHGLDGDAKMSSSKGNYIAVDDSVEEITKKIKKSYCPQGETEGNPMIEIAETFVYPNQETLLIKRPEKFGGDIELTHEQLINDFSNGDLHPMDLKNGIKDFLIEHFAPVREYMEE.

Tyrosine 35 provides a ligand contact to L-tyrosine. The short motif at 40–48 (PSGKIHLGH) is the 'HIGH' region element. Positions 156, 160, 163, and 178 each coordinate L-tyrosine. Positions 213–217 (KMSSS) match the 'KMSKS' region motif. An ATP-binding site is contributed by serine 216.

Belongs to the class-I aminoacyl-tRNA synthetase family. TyrS type 3 subfamily. As to quaternary structure, homodimer.

It is found in the cytoplasm. The catalysed reaction is tRNA(Tyr) + L-tyrosine + ATP = L-tyrosyl-tRNA(Tyr) + AMP + diphosphate + H(+). Catalyzes the attachment of tyrosine to tRNA(Tyr) in a two-step reaction: tyrosine is first activated by ATP to form Tyr-AMP and then transferred to the acceptor end of tRNA(Tyr). This is Tyrosine--tRNA ligase from Methanobrevibacter smithii (strain ATCC 35061 / DSM 861 / OCM 144 / PS).